A 662-amino-acid polypeptide reads, in one-letter code: MVVSEVDIAKADPAAASHPLLLNGDATVAQKNPGSVAENNLCSQYEEKVRPCIDLIDSLRALGVEQDLALPAIAVIGDQSSGKSSVLEALSGVALPRGSGIVTRCPLVLKLKKLVNEDKWRGKVSYQDYEIEISDASEVEKEINKAQNAIAGEGMGISHELITLEISSRDVPDLTLIDLPGITRVAVGNQPADIGYKIKTLIKKYIQRQETISLVVVPSNVDIATTEALSMAQEVDPEGDRTIGILTKPDLVDKGTEDKVVDVVRNLVFHLKKGYMIVKCRGQQEIQDQLSLSEALQREKIFFENHPYFRDLLEEGKATVPCLAEKLTSELITHICKSLPLLENQIKETHQRITEELQKYGVDIPEDENEKMFFLIDKVNAFNQDITALMQGEETVGEEDIRLFTRLRHEFHKWSTIIENNFQEGHKILSRKIQKFENQYRGRELPGFVNYRTFETIVKQQIKALEEPAVDMLHTVTDMVRLAFTDVSIKNFEEFFNLHRTAKSKIEDIRAEQEREGEKLIRLHFQMEQIVYCQDQVYRGALQKVREKELEEEKKKKSWDFGAFQSSSATDSSMEEIFQHLMAYHQEASKRISSHIPLIIQFFMLQTYGQQLQKAMLQLLQDKDTYSWLLKERSDTSDKRKFLKERLARLTQARRRLAQFPG.

Residue Met1 is modified to N-acetylmethionine; in Interferon-induced GTP-binding protein Mx1; alternate. The Dynamin-type G domain maps to 67–340 (DLALPAIAVI…LITHICKSLP (274 aa)). The interval 77 to 84 (GDQSSGKS) is G1 motif. 77–84 (GDQSSGKS) provides a ligand contact to GTP. The G2 motif stretch occupies residues 102–104 (VTR). The tract at residues 178-181 (DLPG) is G3 motif. GTP contacts are provided by residues 178-182 (DLPGI) and 247-250 (TKPD). Positions 247–250 (TKPD) are G4 motif. Residues 279-282 (KCRG) form a G5 motif region. The interval 341–366 (LLENQIKETHQRITEELQKYGVDIPE) is bundle signaling element (BSE). The middle domain stretch occupies residues 366–533 (EDENEKMFFL…HFQMEQIVYC (168 aa)). Residues 367-632 (DENEKMFFLI…KDTYSWLLKE (266 aa)) are stalk. The tract at residues 554-557 (KKKK) is critical for lipid-binding. The 89-residue stretch at 574–662 (MEEIFQHLMA…ARRRLAQFPG (89 aa)) folds into the GED domain.

The protein belongs to the TRAFAC class dynamin-like GTPase superfamily. Dynamin/Fzo/YdjA family. Homotetramer. Oligomerizes into multimeric filamentous or ring-like structures by virtue of its stalk domain. Oligomerization is critical for GTPase activity, protein stability, and recognition of viral target structures. Interacts with TRPC1, TRPC3, TRPC4, TRPC5, TRPC6 and TRPC7. Interacts with HSPA5. Interacts with DDX39A and DDX39B. Interacts with TUBB/TUBB5. The GTP-bound form interacts (via C-terminus) with THOV P5 protein. The GTP-bound form interacts with LACV protein N. Interacts with CCHFV protein N. ISGylated.

It is found in the cytoplasm. The protein resides in the endoplasmic reticulum membrane. It localises to the perinuclear region. Its subcellular location is the nucleus. Interferon-induced dynamin-like GTPase with antiviral activity against a wide range of RNA viruses and some DNA viruses. Its target viruses include negative-stranded RNA viruses and HBV through binding and inactivation of their ribonucleocapsid. May also antagonize reoviridae and asfarviridae replication. Inhibits thogoto virus (THOV) replication by preventing the nuclear import of viral nucleocapsids. Inhibits La Crosse virus (LACV) replication by sequestering viral nucleoprotein in perinuclear complexes, preventing genome amplification, budding, and egress. Inhibits influenza A virus (IAV) replication by decreasing or delaying NP synthesis and by blocking endocytic traffic of incoming virus particles. Enhances ER stress-mediated cell death after influenza virus infection. May regulate the calcium channel activity of TRPCs. The sequence is that of Interferon-induced GTP-binding protein Mx1 (MX1) from Homo sapiens (Human).